A 398-amino-acid polypeptide reads, in one-letter code: uncharacterized protein (398 aa).

In terms of domain architecture, Radical SAM core spans 21–253; sequence TNFGPTNLII…WQLTSTSEPE (233 aa). C37, C41, and C44 together coordinate [4Fe-4S] cluster.

The protein belongs to the radical SAM superfamily. Anaerobic sulfatase-maturating enzyme family. [4Fe-4S] cluster is required as a cofactor.

This is an uncharacterized protein from Synechocystis sp. (strain ATCC 27184 / PCC 6803 / Kazusa).